Reading from the N-terminus, the 525-residue chain is MDFTEAYADTCSTVGLAAREGNVKVLRKLLKKGRSIDVADNRGWMPIHEASYHNSVECLRMLIRADSSENYIKTKTFEGFCALHLAASQGHWKIIQILLEAGADPNATTLEETTPLFLAVENGQIDVLRLLLRYGANVNGSHSMCGWNALHQASFQGNAEIIKLLLKKGANKECQDDFGITPLFVAAQYGKLESLSILISSGADVNCQALDKATPLFIAAQEGHTECVELLLSSGADPDLYCNEDNWQLPIHAAAQMGHTKILDLLIPLTNRVCDTGPNKVSPVYSAVLGGHEECLEMLLQSGYSPDAQMCLVFGFSSPLCMAFQKDCDFFGIVNILLKYGAQLNELHLAYCLKYERFSVFRYFLKKCCPSTPWDHISEFINHAIKAQTKYKEWLPSLLLAGFDPLNLLCSSWIDSVSDDILIFTLEFTNWRRLPPAVEKMLSARASNSSWALQQHIASVPSLTHLCRLEIWSHLKLEHLQSDGFIRQLPLPRSLHDYLLYAEVLRMNEVPELAVFQDGEISETT.

11 ANK repeats span residues 9–38, 42–71, 78–107, 111–140, 145–174, 178–207, 211–240, 246–275, 279–308, 315–346, and 348–373; these read DTCS…SIDV, RGWM…SENY, EGFC…DPNA, EETT…NVNG, CGWN…NKEC, FGIT…DVNC, DKAT…DPDL, NWQL…RVCD, NKVS…SPDA, GFSS…QLNE, and HLAY…PSTP. In terms of domain architecture, SOCS box spans 441–505; sequence MLSARASNSS…HDYLLYAEVL (65 aa).

Belongs to the ankyrin SOCS box (ASB) family. As to quaternary structure, interacts with ELOB and TNFRSF1B.

It functions in the pathway protein modification; protein ubiquitination. Its function is as follows. Probable substrate-recognition component of a SCF-like ECS (Elongin-Cullin-SOCS-box protein) E3 ubiquitin-protein ligase complex which mediates the ubiquitination and subsequent proteasomal degradation of target proteins. Recognizes TNFRSF1B. This is Ankyrin repeat and SOCS box protein 3 (ASB3) from Bos taurus (Bovine).